The chain runs to 309 residues: Serine/threonine-protein phosphatase 2A catalytic subunit beta isoform (309 aa).

Residues aspartate 57, histidine 59, aspartate 85, and asparagine 117 each contribute to the Mn(2+) site. Histidine 118 (proton donor) is an active-site residue. Residues histidine 167 and histidine 241 each coordinate Mn(2+). Position 307 is a phosphotyrosine (tyrosine 307). Leucine 309 bears the Leucine methyl ester mark.

The protein belongs to the PPP phosphatase family. PP-1 subfamily. Found in a complex with at least ARL2, PPP2CB, PPP2R1A, PPP2R2A, PPP2R5E and TBCD. Interacts with TBCD. PP2A consists of a common heterodimeric core enzyme (composed of a 36 kDa catalytic subunit (subunit C) and a 65 kDa constant regulatory subunit (PR65) (subunit A)) that associates with a variety of regulatory subunits. Proteins that associate with the core dimer include three families of regulatory subunits B (the R2/B/PR55/B55, R3/B''/PR72/PR130/PR59 and R5/B'/B56 families), the 48 kDa variable regulatory subunit, viral proteins, and cell signaling molecules. Binds PPME1. May indirectly interact with SGO1, most probably through regulatory B56 subunits. Interacts with CTTNBP2NL. Interacts with PTPA. Part of the core of STRIPAK complexes composed of PP2A catalytic and scaffolding subunits, the striatins (PP2A regulatory subunits), the striatin-associated proteins MOB4, STRIP1 and STRIP2, PDCD10 and members of the STE20 kinases, such as STK24 and STK26. It depends on Mn(2+) as a cofactor. Reversibly methyl esterified on Leu-309 by leucine carboxyl methyltransferase 1 (Lcmt1) and protein phosphatase methylesterase 1 (PPME1). Carboxyl methylation influences the affinity of the catalytic subunit for the different regulatory subunits, thereby modulating the PP2A holoenzyme's substrate specificity, enzyme activity and cellular localization. Post-translationally, phosphorylation of either threonine (by autophosphorylation-activated protein kinase) or tyrosine results in inactivation of the phosphatase. Auto-dephosphorylation has been suggested as a mechanism for reactivation. In terms of processing, may be monoubiquitinated by NOSIP.

The protein resides in the cytoplasm. Its subcellular location is the nucleus. It is found in the chromosome. It localises to the centromere. The protein localises to the cytoskeleton. The protein resides in the spindle pole. It catalyses the reaction O-phospho-L-seryl-[protein] + H2O = L-seryl-[protein] + phosphate. It carries out the reaction O-phospho-L-threonyl-[protein] + H2O = L-threonyl-[protein] + phosphate. Its function is as follows. Catalytic subunit of protein phosphatase 2A (PP2A), a serine/threonine phosphatase involved in the regulation of a wide variety of enzymes, signal transduction pathways, and cellular events. PP2A can modulate the activity of phosphorylase B kinase, casein kinase 2, mitogen-stimulated S6 kinase, and MAP-2 kinase. Part of the striatin-interacting phosphatase and kinase (STRIPAK) complexes. STRIPAK complexes have critical roles in protein (de)phosphorylation and are regulators of multiple signaling pathways including Hippo, MAPK, nuclear receptor and cytoskeleton remodeling. Different types of STRIPAK complexes are involved in a variety of biological processes such as cell growth, differentiation, apoptosis, metabolism and immune regulation. This Oryctolagus cuniculus (Rabbit) protein is Serine/threonine-protein phosphatase 2A catalytic subunit beta isoform (PPP2CB).